A 474-amino-acid chain; its full sequence is Vacuolar basic amino acid transporter 2 (474 aa).

Residues methionine 1 to asparagine 33 lie on the Cytoplasmic side of the membrane. Residues cysteine 34–asparagine 54 form a helical membrane-spanning segment. The Vacuolar segment spans residues isoleucine 55–arginine 62. A helical transmembrane segment spans residues alanine 63–proline 85. At serine 86–asparagine 97 the chain is on the cytoplasmic side. The helical transmembrane segment at leucine 98–isoleucine 118 threads the bilayer. The Vacuolar segment spans residues glycine 119–arginine 121. A helical membrane pass occupies residues tryptophan 122 to valine 142. The Cytoplasmic segment spans residues proline 143 to aspartate 167. Residues valine 168–glycine 188 form a helical membrane-spanning segment. The Vacuolar segment spans residues cysteine 189–tryptophan 196. Residues threonine 197–leucine 217 traverse the membrane as a helical segment. The Cytoplasmic portion of the chain corresponds to histidine 218–serine 238. A helical transmembrane segment spans residues valine 239–leucine 259. The Vacuolar segment spans residues proline 260–lysine 273. The chain crosses the membrane as a helical span at residues alanine 274–phenylalanine 294. At serine 295–arginine 303 the chain is on the cytoplasmic side. Residues leucine 304–glutamate 324 form a helical membrane-spanning segment. Residues lysine 325–leucine 331 are Vacuolar-facing. The helical transmembrane segment at isoleucine 332–phenylalanine 352 threads the bilayer. Residues threonine 353–serine 375 lie on the Cytoplasmic side of the membrane. Residues isoleucine 376–leucine 396 traverse the membrane as a helical segment. Over leucine 397–histidine 447 the chain is Vacuolar. N-linked (GlcNAc...) asparagine glycosylation is present at asparagine 420. Residues leucine 448–alanine 468 form a helical membrane-spanning segment. Residues lysine 469–arginine 474 lie on the Cytoplasmic side of the membrane.

The protein belongs to the major facilitator superfamily.

The protein resides in the vacuole membrane. Transporter required for vacuolar uptake of histidine, arginine and lysine and to a lesser extent tyrosine. This is Vacuolar basic amino acid transporter 2 (VBA2) from Saccharomyces cerevisiae (strain ATCC 204508 / S288c) (Baker's yeast).